We begin with the raw amino-acid sequence, 351 residues long: Phosphoribosylformylglycinamidine cyclo-ligase (351 aa).

It belongs to the AIR synthase family.

The protein localises to the cytoplasm. The catalysed reaction is 2-formamido-N(1)-(5-O-phospho-beta-D-ribosyl)acetamidine + ATP = 5-amino-1-(5-phospho-beta-D-ribosyl)imidazole + ADP + phosphate + H(+). It participates in purine metabolism; IMP biosynthesis via de novo pathway; 5-amino-1-(5-phospho-D-ribosyl)imidazole from N(2)-formyl-N(1)-(5-phospho-D-ribosyl)glycinamide: step 2/2. The sequence is that of Phosphoribosylformylglycinamidine cyclo-ligase from Oleidesulfovibrio alaskensis (strain ATCC BAA-1058 / DSM 17464 / G20) (Desulfovibrio alaskensis).